A 557-amino-acid polypeptide reads, in one-letter code: Selenoprotein N (557 aa).

The span at 1–21 (MAADVDKTPAGEQKDDHEDRG) shows a compositional bias: basic and acidic residues. The interval 1-28 (MAADVDKTPAGEQKDDHEDRGTPSSRRG) is disordered. The chain crosses the membrane as a helical span at residues 35 to 55 (ISSLFIIAAIPVIGVCIKYYL). U430 is a non-standard amino acid (selenocysteine). 2 N-linked (GlcNAc...) asparagine glycosylation sites follow: N451 and N499.

In terms of assembly, interacts with ryr3.

The protein localises to the endoplasmic reticulum membrane. Its function is as follows. Plays an important role in cell protection against oxidative stress and in the regulation of redox-related calcium homeostasis. Regulates the calcium level of the ER by protecting the calcium pump ATP2A2 against the oxidoreductase ERO1A-mediated oxidative damage. Acts as a modulator of ryanodine receptor (RyR) activity: protects RyR from oxidation due to increased oxidative stress, or directly controls the RyR redox state, regulating the RyR-mediated calcium mobilization required for normal muscle development and differentiation. Plays an important role in muscle development and differentiation during early development. Required for development of the slow muscle fiber lineage. Required for the correct organization and attachment of the myofibrils, as well as for the continuity and integrity of the connective tissue that forms the myoseptum. The chain is Selenoprotein N from Danio rerio (Zebrafish).